Consider the following 217-residue polypeptide: LSM12 homolog A (217 aa).

The 70-residue stretch at 9 to 78 folds into the Sm domain; it reads VNAVNDCFSI…CSNVQVIKEC (70 aa). The region spanning 86-184 is the AD domain; that stretch reads QKLNLEQVKM…IIKQFFNTRP (99 aa). The disordered stretch occupies residues 185–217; the sequence is SPVPESGAAASTSSPSVSPTSSSLASGSPVPAN. Over residues 190-217 the composition is skewed to low complexity; sequence SGAAASTSSPSVSPTSSSLASGSPVPAN.

The protein belongs to the LSM12 family. Component of the Atx2-tyf activator complex, composed of Atx2, tyf, pAbp, Lsm12a. Interacts with tyf, Atx2 and pAbp.

Its function is as follows. Component of the Atx2-tyf activator complex which functions in the circadian pacemaker neurons to activate the TYF-dependent translation of per and maintain 24 hour periodicity in circadian behaviors. Within the Atx2-tyf complex, likely to function as a molecular adapter which stabilizes the interaction between Atx2 and the translational regulator tyf. The polypeptide is LSM12 homolog A (Drosophila melanogaster (Fruit fly)).